The chain runs to 212 residues: uncharacterized protein (212 aa).

Residues Gly-53, Glu-74, and Asp-97 each contribute to the S-adenosyl-L-methionine site.

It belongs to the methyltransferase superfamily. YrrT family.

Functionally, could be a S-adenosyl-L-methionine-dependent methyltransferase. This is an uncharacterized protein from Bacillus cereus (strain ATCC 10987 / NRS 248).